We begin with the raw amino-acid sequence, 384 residues long: Beta-ureidopropionase (384 aa).

A CN hydrolase domain is found at 72-344 (VHVGLVQNRI…DGLLVAKLDL (273 aa)). Glu119 functions as the Proton acceptor in the catalytic mechanism. Catalysis depends on Lys196, which acts as the Proton donor. Residue Cys233 is the Nucleophile of the active site. Ser378 is modified (phosphoserine).

It belongs to the carbon-nitrogen hydrolase superfamily. BUP family. As to quaternary structure, homodimer, homotetramer, homooctamer; can also form higher homooligomers. Detected in liver (at protein level).

It localises to the cytoplasm. The enzyme catalyses 3-(carbamoylamino)propanoate + H2O + 2 H(+) = beta-alanine + NH4(+) + CO2. It carries out the reaction 3-(carbamoylamino)-2-methylpropanoate + H2O + 2 H(+) = (R)-3-amino-2-methylpropanoate + NH4(+) + CO2. Its pathway is amino-acid biosynthesis; beta-alanine biosynthesis. With respect to regulation, strongly inhibited by 50 mM Zn(2+). Not inhibited by EDTA. Competitively inhibited by beta-alanine, 5-aminolevulinic acid (ALA), beta-aminoisobutyrate and 4-ureidobutyrate. Functionally, catalyzes a late step in pyrimidine degradation. Converts N-carbamoyl-beta-alanine (3-ureidopropanoate) into beta-alanine, ammonia and carbon dioxide. Likewise, converts N-carbamoyl-beta-aminoisobutyrate (3-ureidoisobutyrate) into beta-aminoisobutyrate, ammonia and carbon dioxide. This Homo sapiens (Human) protein is Beta-ureidopropionase (UPB1).